The following is a 540-amino-acid chain: MHEIITLQLGQQSNYLATHFWNAQESYFTYSEDQEPAVNHDIHWRPGIGADGTETYMPRTVIYDLKGGFGSMAKTNALYNDLEEGQTPQALWNGPTVLQKQPAIPQSAYQQSLDAGLEPPPLTTDTVRYWSDFNRVFYHPRSVVQLNEYELNSSIMPFERYATGEDLFASLDKEHDLLDRDLRPFIEEADQMQGIQVMTGLDDAWGGFAAKYLERIRDEYGKTAMFVWGSEQESVMRAGGLSREKRLLRLANKARTMTEVYKYASVVVPFTVPATLPGSVVLDAGSQWHNTALSAAAIESVTLPSRLRDPANRDTMATLADSLNAMGKQNVASLGMSFAPEPTEEEDVVMEGTQDFRQRQLLNQKSSRHAAVMVKENPEGVFLDINFTPTDQLDYVRRRGGGDDDRPRVFSQMLTSRGYEIDEQVQEAKEAEEDERFRRRSSYETVMKSYHTPLRFPLLDSFPQIFRDDSGEPLKRGGAINVTSSLSTDASVHKRLKSLRTTVGRSIGLEDREQLGNELAEMADEYHEGWSSGSDDGDDD.

A disordered region spans residues 517–540 (NELAEMADEYHEGWSSGSDDGDDD).

Belongs to the misato family.

It localises to the mitochondrion. Functionally, involved in the partitioning of the mitochondrial organelle and mitochondrial DNA (mtDNA) inheritance. This Neurospora crassa (strain ATCC 24698 / 74-OR23-1A / CBS 708.71 / DSM 1257 / FGSC 987) protein is Protein dml-1 (dml-1).